The chain runs to 1309 residues: Putative receptor-type tyrosine-protein phosphatase mosPTP-1 (1309 aa).

The N-terminal stretch at 1-36 (MNSAPRNAGAARSVDRRGFIAACGLLVLLVVRMLGA) is a signal peptide. Over 37–572 (ADATRIFDIE…RQVYDDYNLA (536 aa)) the chain is Extracellular. N-linked (GlcNAc...) asparagine glycans are attached at residues asparagine 60, asparagine 107, asparagine 162, asparagine 257, asparagine 353, asparagine 389, asparagine 455, asparagine 501, and asparagine 513. 4 Fibronectin type-III domains span residues 147 to 244 (PPGR…TLRE), 249 to 347 (KPVT…DEGV), 350 to 449 (KPLN…SGPS), and 450 to 553 (APKV…LQLH). The helical transmembrane segment at 573–593 (VLGGIVFSCFGLLLIVLSFLL) threads the bilayer. The Cytoplasmic portion of the chain corresponds to 594–1309 (WKKCFHAAYY…NHLNLDHNQS (716 aa)). 2 consecutive Tyrosine-protein phosphatase domains span residues 656–921 (FSKE…LVEA) and 944–1196 (IDNQ…LSYM). Cysteine 862 (phosphocysteine intermediate) is an active-site residue. The tract at residues 1239–1269 (NSGDGGGNGNDGVPTGNGTNGGLPMSGGGTT) is disordered. Residues 1256–1268 (GTNGGLPMSGGGT) are compositionally biased toward gly residues.

The protein belongs to the protein-tyrosine phosphatase family. Receptor class subfamily. Interacts with C-type lectin mosGCTL-1; the interaction probably mediates the recruitment of West Nile virus particles in complex with C-type lectin mosGCTL-1 to the cell surface. Interacts with C-type lectin mosGCTL-7; the interaction probably mediates the recruitment of Japanese encephalitis virus particles in complex with C-type lectin mosGCTL-7 to the cell surface. As to expression, salivary gland (at protein level). Hemolymph. Low-level expression in midgut.

It localises to the cell membrane. It carries out the reaction O-phospho-L-tyrosyl-[protein] + H2O = L-tyrosyl-[protein] + phosphate. Its function is as follows. Putative protein tyrosine-protein phosphatase. (Microbial infection) Facilitates West Nile virus infection in mosquitoes probably via recruiting West Nile virus particles in complex with C-type lectin mosGCTL-1 to the cell surface. Functionally, (Microbial infection) Facilitates Japanese encephalitis virus infection in mosquitoes probably via recruiting Japanese encephalitis virus particles in complex with C-type lectin mosGCTL-7 to the cell surface. The chain is Putative receptor-type tyrosine-protein phosphatase mosPTP-1 from Aedes aegypti (Yellowfever mosquito).